Here is a 423-residue protein sequence, read N- to C-terminus: Glucose-1-phosphate adenylyltransferase (423 aa).

Alpha-D-glucose 1-phosphate contacts are provided by residues tyrosine 107, glycine 172, 187–188, and serine 205; that span reads EK.

The protein belongs to the bacterial/plant glucose-1-phosphate adenylyltransferase family. In terms of assembly, homotetramer.

The enzyme catalyses alpha-D-glucose 1-phosphate + ATP + H(+) = ADP-alpha-D-glucose + diphosphate. Its pathway is glycan biosynthesis; glycogen biosynthesis. Its function is as follows. Involved in the biosynthesis of ADP-glucose, a building block required for the elongation reactions to produce glycogen. Catalyzes the reaction between ATP and alpha-D-glucose 1-phosphate (G1P) to produce pyrophosphate and ADP-Glc. This Albidiferax ferrireducens (strain ATCC BAA-621 / DSM 15236 / T118) (Rhodoferax ferrireducens) protein is Glucose-1-phosphate adenylyltransferase.